Here is a 278-residue protein sequence, read N- to C-terminus: Large ribosomal subunit protein uL2 (278 aa).

2 disordered regions span residues 1-53 (MAIR…TTRH) and 224-278 (VVMN…NKKR). Residues 23-33 (EITRSTPEKSL) show a composition bias toward basic and acidic residues. Over residues 258-267 (RNPNRYSNNM) the composition is skewed to polar residues. A compositionally biased stretch (basic residues) spans 269-278 (VRRRRPNKKR).

The protein belongs to the universal ribosomal protein uL2 family. In terms of assembly, part of the 50S ribosomal subunit. Forms a bridge to the 30S subunit in the 70S ribosome.

In terms of biological role, one of the primary rRNA binding proteins. Required for association of the 30S and 50S subunits to form the 70S ribosome, for tRNA binding and peptide bond formation. It has been suggested to have peptidyltransferase activity; this is somewhat controversial. Makes several contacts with the 16S rRNA in the 70S ribosome. The sequence is that of Large ribosomal subunit protein uL2 from Corynebacterium aurimucosum (strain ATCC 700975 / DSM 44827 / CIP 107346 / CN-1) (Corynebacterium nigricans).